A 494-amino-acid chain; its full sequence is Probable cytosol aminopeptidase (494 aa).

Mn(2+) is bound by residues Lys-260 and Asp-265. The active site involves Lys-272. Mn(2+)-binding residues include Asp-283, Asp-342, and Glu-344. The active site involves Arg-346.

It belongs to the peptidase M17 family. The cofactor is Mn(2+).

It localises to the cytoplasm. The enzyme catalyses Release of an N-terminal amino acid, Xaa-|-Yaa-, in which Xaa is preferably Leu, but may be other amino acids including Pro although not Arg or Lys, and Yaa may be Pro. Amino acid amides and methyl esters are also readily hydrolyzed, but rates on arylamides are exceedingly low.. It carries out the reaction Release of an N-terminal amino acid, preferentially leucine, but not glutamic or aspartic acids.. Its function is as follows. Presumably involved in the processing and regular turnover of intracellular proteins. Catalyzes the removal of unsubstituted N-terminal amino acids from various peptides. The polypeptide is Probable cytosol aminopeptidase (Bacillus cereus (strain ZK / E33L)).